Reading from the N-terminus, the 77-residue chain is UPF0401 protein ECP_3010 (77 aa).

This sequence belongs to the UPF0401 family.

This is UPF0401 protein ECP_3010 from Escherichia coli O6:K15:H31 (strain 536 / UPEC).